A 255-amino-acid polypeptide reads, in one-letter code: Small ribosomal subunit protein eS1 (255 aa).

A2 is subject to N-acetylalanine; partial.

This sequence belongs to the eukaryotic ribosomal protein eS1 family. As to quaternary structure, component of the small ribosomal subunit. Mature ribosomes consist of a small (40S) and a large (60S) subunit. The 40S subunit contains about 33 different proteins and 1 molecule of RNA (18S). The 60S subunit contains about 49 different proteins and 3 molecules of RNA (25S, 5.8S and 5S).

It is found in the cytoplasm. The protein is Small ribosomal subunit protein eS1 of Yarrowia lipolytica (strain CLIB 122 / E 150) (Yeast).